Consider the following 442-residue polypeptide: 3-ketoacyl-CoA thiolase (442 aa).

Cys105 (acyl-thioester intermediate) is an active-site residue. Active-site proton acceptor residues include His398 and Cys428.

It belongs to the thiolase-like superfamily. Thiolase family. As to quaternary structure, heterotetramer of two alpha chains (FadJ) and two beta chains (FadI).

Its subcellular location is the cytoplasm. It catalyses the reaction an acyl-CoA + acetyl-CoA = a 3-oxoacyl-CoA + CoA. It functions in the pathway lipid metabolism; fatty acid beta-oxidation. Functionally, catalyzes the final step of fatty acid oxidation in which acetyl-CoA is released and the CoA ester of a fatty acid two carbons shorter is formed. This chain is 3-ketoacyl-CoA thiolase, found in Aliivibrio fischeri (strain ATCC 700601 / ES114) (Vibrio fischeri).